The following is a 560-amino-acid chain: Formate--tetrahydrofolate ligase (560 aa).

70-77 (TPAGEGKT) serves as a coordination point for ATP.

The protein belongs to the formate--tetrahydrofolate ligase family.

The catalysed reaction is (6S)-5,6,7,8-tetrahydrofolate + formate + ATP = (6R)-10-formyltetrahydrofolate + ADP + phosphate. It functions in the pathway one-carbon metabolism; tetrahydrofolate interconversion. The chain is Formate--tetrahydrofolate ligase from Methanocorpusculum labreanum (strain ATCC 43576 / DSM 4855 / Z).